The primary structure comprises 117 residues: Modulator protein MzrA (117 aa).

Residues 1–9 (MNSPGLRKP) lie on the Cytoplasmic side of the membrane. Residues 10–29 (TIWRPLLLLFPLLALLLSMS) traverse the membrane as a helical segment. Topologically, residues 30–117 (SPRLPDEVML…THGTIRVARS (88 aa)) are periplasmic.

It belongs to the MzrA family. Interacts with EnvZ.

Its subcellular location is the cell inner membrane. Modulates the activity of the EnvZ/OmpR two-component regulatory system, probably by directly modulating EnvZ enzymatic activity and increasing stability of phosphorylated OmpR. The sequence is that of Modulator protein MzrA from Dickeya zeae (strain Ech586) (Dickeya dadantii (strain Ech586)).